The following is a 145-amino-acid chain: Immunoglobulin iota chain (145 aa).

Positions 1–19 are cleaved as a signal peptide; that stretch reads MSWAPVLLMLFVYCTGCGP. The framework-1 stretch occupies residues 20–41; sequence QPVLHQPPAMSSALGTTIRLTC. In terms of domain architecture, Ig-like V-type spans 20–132; that stretch reads QPVLHQPPAM…EKEEREREWE (113 aa). A disulfide bond links Cys-41 and Cys-115. The segment at 42–56 is complementarity-determining-1; that stretch reads TLRNDHDIGVYSVYW. The tract at residues 57–70 is framework-2; the sequence is YQQRPGHPPRFLLR. Residues 71–81 form a complementarity-determining-2 region; that stretch reads YFSQSDKSQGP. Residues 82–115 are framework-3; the sequence is QVPPRFSGSKDVARNRGYLSISELQPEDEAMYYC. Residues 121-130 are compositionally biased toward basic and acidic residues; sequence SSEKEERERE. Residues 121–145 form a disordered region; it reads SSEKEEREREWEEEMEPTAARTRVP.

It belongs to the immunoglobulin superfamily. As to quaternary structure, interacts with IGLL1. Interacts with SYNV1/HRD1 (via N-terminus); this interaction leads to increased VPREB1 ubiquitination and degradation in pre-B cells, possibly through a lysosomal, not proteasomal, pathway. In terms of tissue distribution, only expressed by pre-B-cells.

It localises to the endoplasmic reticulum. Its function is as follows. Associates with the Ig-mu chain to form a molecular complex that is expressed on the surface of pre-B-cells. This complex presumably regulates Ig gene rearrangements in the early steps of B-cell differentiation. The protein is Immunoglobulin iota chain (VPREB1) of Homo sapiens (Human).